We begin with the raw amino-acid sequence, 651 residues long: Sodium/potassium/calcium exchanger 2 (651 aa).

Residues 1-38 are Cytoplasmic-facing; it reads MALCKKTVGSVLEEWCLNEPLFGCKRHQNVRKKLRLIR. Residues 39–59 form a helical membrane-spanning segment; that stretch reads IIGLLVSVVAISTFSLSISAF. The Extracellular portion of the chain corresponds to 60–134; it reads FKMETHSTVL…DLFSLEERRK (75 aa). Residues 92–123 form a disordered region; the sequence is QNEGSTPDSPTSMKHEAEHDNATEEHSKGEYP. A compositionally biased stretch (polar residues) spans 93–103; sequence NEGSTPDSPTS. A compositionally biased stretch (basic and acidic residues) spans 104–122; the sequence is MKHEAEHDNATEEHSKGEY. The N-linked (GlcNAc...) asparagine glycan is linked to Asn-112. Residues 135–155 traverse the membrane as a helical segment; it reads GAVILHVIGMIYMFIALAIVC. The Cytoplasmic portion of the chain corresponds to 156-179; sequence DEFFVPSLTVITEKLSISDDVAGA. One copy of the Alpha-1 repeat lies at 176–216; sequence VAGATFMAAGGSAPELFTSLIGVFISHSNVGIGTIVGSAVF. The chain crosses the membrane as a helical span at residues 180–200; the sequence is TFMAAGGSAPELFTSLIGVFI. The Extracellular segment spans residues 201-206; the sequence is SHSNVG. A helical membrane pass occupies residues 207–227; it reads IGTIVGSAVFNILFVIGMCAL. The Cytoplasmic segment spans residues 228-245; it reads FSREILNLTWWPLFRDVS. Residues 246–266 traverse the membrane as a helical segment; sequence FYIVDLILLIIFFLDNLIMWW. Over 267–459 the chain is Extracellular; it reads ESLTLLTAYF…SLAWPDTPRK (193 aa). The segment covering 304–322 has biased composition (basic and acidic residues); that stretch reads ATTGDAEGKSPTAGDKDDQ. Positions 304 to 338 are disordered; sequence ATTGDAEGKSPTAGDKDDQTLTTKPRLQRGGSSAS. A compositionally biased stretch (polar residues) spans 323–338; that stretch reads TLTTKPRLQRGGSSAS. A helical membrane pass occupies residues 460–480; the sequence is QLTYLLVLPIVFPLWVSLPDV. Over 481–487 the chain is Cytoplasmic; the sequence is RNPRSRK. The chain crosses the membrane as a helical span at residues 488–508; it reads FFPITFFGSISWIAFFSYLMV. Residues 509–523 are Extracellular-facing; the sequence is WWAHQVGETIGISEE. A helical transmembrane segment spans residues 524-544; it reads IMGLTILAAGTSIPDLITSVI. An Alpha-2 repeat occupies 531–562; it reads AAGTSIPDLITSVIVARKGLGDMAVSSSVGSN. Topologically, residues 545 to 562 are cytoplasmic; the sequence is VARKGLGDMAVSSSVGSN. The helical transmembrane segment at 563–583 threads the bilayer; the sequence is IFDITVGLPLPWLLYAVINNF. Residues 584 to 592 are Extracellular-facing; the sequence is SPVTVSSNG. A helical membrane pass occupies residues 593–613; it reads LFCAIVLLFIMLLFVILSIAF. The Cytoplasmic portion of the chain corresponds to 614–620; that stretch reads CKWRMNK. The chain crosses the membrane as a helical span at residues 621 to 641; sequence FLGFLMFGLYFVFLIVSVLLE. Topologically, residues 642–651 are extracellular; the sequence is DKVIQCPVSI.

The protein belongs to the Ca(2+):cation antiporter (CaCA) (TC 2.A.19) family. SLC24A subfamily. As to expression, retinal cones. Found in the cone inner segment layer and in a subpopulation of ganglion cells.

The protein localises to the cell membrane. It catalyses the reaction Ca(2+)(out) + K(+)(out) + 4 Na(+)(in) = Ca(2+)(in) + K(+)(in) + 4 Na(+)(out). Its function is as follows. Calcium, potassium:sodium antiporter that transports 1 Ca(2+) and 1 K(+) in exchange for 4 Na(+). Required for learming and memory by regulating neuronal Ca(2+), which is essential for the development of synaptic plasticity. In Gallus gallus (Chicken), this protein is Sodium/potassium/calcium exchanger 2 (SLC24A2).